The chain runs to 129 residues: Small ribosomal subunit protein uS11 (129 aa).

The protein belongs to the universal ribosomal protein uS11 family. Part of the 30S ribosomal subunit. Interacts with proteins S7 and S18. Binds to IF-3.

Functionally, located on the platform of the 30S subunit, it bridges several disparate RNA helices of the 16S rRNA. Forms part of the Shine-Dalgarno cleft in the 70S ribosome. The chain is Small ribosomal subunit protein uS11 from Bartonella tribocorum (strain CIP 105476 / IBS 506).